A 308-amino-acid polypeptide reads, in one-letter code: Ribosomal RNA small subunit methyltransferase H (308 aa).

Residues 36 to 38 (GGH), Asp-55, Phe-86, Asp-103, and Gln-110 contribute to the S-adenosyl-L-methionine site.

Belongs to the methyltransferase superfamily. RsmH family.

It localises to the cytoplasm. The catalysed reaction is cytidine(1402) in 16S rRNA + S-adenosyl-L-methionine = N(4)-methylcytidine(1402) in 16S rRNA + S-adenosyl-L-homocysteine + H(+). Its function is as follows. Specifically methylates the N4 position of cytidine in position 1402 (C1402) of 16S rRNA. The chain is Ribosomal RNA small subunit methyltransferase H from Helicobacter pylori (strain B38).